A 428-amino-acid chain; its full sequence is Protein CANDIDATE G-PROTEIN COUPLED RECEPTOR 6 (428 aa).

The first 22 residues, 1–22, serve as a signal peptide directing secretion; that stretch reads MTILPFLAAVFVLQLLSTLTVA. 3 N-linked (GlcNAc...) asparagine glycosylation sites follow: asparagine 31, asparagine 89, and asparagine 157. 7 helical membrane-spanning segments follow: residues 173–193, 202–222, 238–258, 276–296, 310–330, 356–376, and 385–405; these read LYLV…CFCW, IHLL…CAAV, IVFY…IVLI, LLVI…VIGE, IFFL…VWSM, FYVL…VMKM, and VSNA…FYMF.

This sequence belongs to the LU7TM family.

Its subcellular location is the membrane. In terms of biological role, G-protein coupled receptor. Plays a role in plants and microbes interactions. This is Protein CANDIDATE G-PROTEIN COUPLED RECEPTOR 6 from Arabidopsis thaliana (Mouse-ear cress).